Consider the following 291-residue polypeptide: 4-diphosphocytidyl-2-C-methyl-D-erythritol kinase (291 aa).

The active site involves Lys-12. 95-105 is an ATP binding site; sequence PDGGGLGGGSS. The active site involves Asp-137.

This sequence belongs to the GHMP kinase family. IspE subfamily.

It carries out the reaction 4-CDP-2-C-methyl-D-erythritol + ATP = 4-CDP-2-C-methyl-D-erythritol 2-phosphate + ADP + H(+). It participates in isoprenoid biosynthesis; isopentenyl diphosphate biosynthesis via DXP pathway; isopentenyl diphosphate from 1-deoxy-D-xylulose 5-phosphate: step 3/6. In terms of biological role, catalyzes the phosphorylation of the position 2 hydroxy group of 4-diphosphocytidyl-2C-methyl-D-erythritol. The chain is 4-diphosphocytidyl-2-C-methyl-D-erythritol kinase from Alkalilimnicola ehrlichii (strain ATCC BAA-1101 / DSM 17681 / MLHE-1).